The chain runs to 650 residues: Chaperone protein DnaK (650 aa).

Residue Thr200 is modified to Phosphothreonine; by autocatalysis. Low complexity predominate over residues 611-636 (AQQAGAAGAAGAAEGAAHAGGAQQAA). The segment at 611-637 (AQQAGAAGAAGAAEGAAHAGGAQQAAD) is disordered.

Belongs to the heat shock protein 70 family.

In terms of biological role, acts as a chaperone. The sequence is that of Chaperone protein DnaK from Burkholderia ambifaria (strain MC40-6).